A 502-amino-acid chain; its full sequence is Probable cytosol aminopeptidase (502 aa).

Mn(2+) contacts are provided by Lys-265 and Asp-270. Residue Lys-277 is part of the active site. Mn(2+)-binding residues include Asp-288, Asp-347, and Glu-349. Residue Arg-351 is part of the active site.

It belongs to the peptidase M17 family. Mn(2+) serves as cofactor.

It localises to the cytoplasm. The catalysed reaction is Release of an N-terminal amino acid, Xaa-|-Yaa-, in which Xaa is preferably Leu, but may be other amino acids including Pro although not Arg or Lys, and Yaa may be Pro. Amino acid amides and methyl esters are also readily hydrolyzed, but rates on arylamides are exceedingly low.. The enzyme catalyses Release of an N-terminal amino acid, preferentially leucine, but not glutamic or aspartic acids.. Its function is as follows. Presumably involved in the processing and regular turnover of intracellular proteins. Catalyzes the removal of unsubstituted N-terminal amino acids from various peptides. The protein is Probable cytosol aminopeptidase of Rickettsia bellii (strain RML369-C).